Here is a 542-residue protein sequence, read N- to C-terminus: Malolactic enzyme (542 aa).

Tyr92 serves as the catalytic Proton donor. Lys165 functions as the Proton acceptor in the catalytic mechanism. Lys165 contacts substrate. Mn(2+) is bound by residues Glu236, Asp237, and Asp260. NAD(+)-binding positions include 293–296 (AGTA), Asn405, and Asn450. Substrate is bound at residue Asn450.

It belongs to the malic enzymes family. As to quaternary structure, homodimer. Mn(2+) is required as a cofactor. It depends on NAD(+) as a cofactor.

It catalyses the reaction (S)-malate + H(+) = (S)-lactate + CO2. Oxamate, fructose-1,6-diphosphate and L-lactate act as non-competitive inhibitors, whereas succinate, citrate and tartrate isomers produce a competitive inhibition. Functionally, involved in the malolactic fermentation (MLF) of wine, which results in a natural decrease in acidity and favorable changes in wine flavors. Catalyzes the decarboxylation of L-malate to L-lactate. The chain is Malolactic enzyme (mleS) from Leuconostoc mesenteroides.